A 93-amino-acid polypeptide reads, in one-letter code: Protein S100-A8 (93 aa).

EF-hand domains are found at residues 12-47 (IIDV…QYIR) and 46-81 (IRKK…MGVA). Residues His-17 and His-27 each contribute to the Zn(2+) site. Asp-33 contacts Ca(2+). Cys-42 is modified (S-nitrosocysteine). Ca(2+) contacts are provided by Asp-59, Asn-61, Asp-63, and Glu-70. His-83 and His-87 together coordinate Zn(2+).

This sequence belongs to the S-100 family. As to quaternary structure, homodimer. Preferentially exists as a heterodimer or heterotetramer with S100A9 known as calprotectin (S100A8/A9). S100A8 interacts with AGER, ATP2A2 and with the heterodimeric complex formed by TLR4 and LY96. Interacts with GAPDH. Calprotectin (S100A8/9) interacts with CEACAM3 and tubulin filaments in a calcium-dependent manner. Heterotetrameric calprotectin (S100A8/A9) interacts with ANXA6 and associates with tubulin filaments in activated monocytes. S100A8 and calprotectin (S100A8/9) interact with NCF2/P67PHOX, RAC1 and RAC2. Calprotectin (S100A8/9) interacts with CYBA and CYBB. Calprotectin (S100A8/9) interacts with NOS2 to form the iNOS-S100A8/A9 transnitrosylase complex; induced by LDL(ox). Calprotectin (S100A8/9) interacts with CD69. Calprotectin (S100A8/9) is predominantly expressed in myeloid cells. Except for inflammatory conditions, the expression is restricted to a specific stage of myeloid differentiation since both proteins are expressed in circulating neutrophils and monocytes but are absent in normal tissue macrophages and lymphocytes. Under chronic inflammatory conditions, such as psoriasis and malignant disorders, also expressed in the epidermis. Found in high concentrations at local sites of inflammation or in the serum of patients with inflammatory diseases such as rheumatoid, cystic fibrosis, inflammatory bowel disease, Crohn's disease, giant cell arteritis, cystic fibrosis, Sjogren's syndrome, systemic lupus erythematosus, and progressive systemic sclerosis. Involved in the formation and deposition of amyloids in the aging prostate known as corpora amylacea inclusions. Strongly up-regulated in many tumors, including gastric, esophageal, colon, pancreatic, bladder, ovarian, thyroid, breast and skin cancers.

It is found in the secreted. Its subcellular location is the cytoplasm. It localises to the cytoskeleton. The protein resides in the cell membrane. Calprotectin (S100A8/A9) activity on TLR4 signaling is inhibited by paquinimod. In terms of biological role, S100A8 is a calcium- and zinc-binding protein which plays a prominent role in the regulation of inflammatory processes and immune response. It can induce neutrophil chemotaxis and adhesion. Predominantly found as calprotectin (S100A8/A9) which has a wide plethora of intra- and extracellular functions. The intracellular functions include: facilitating leukocyte arachidonic acid trafficking and metabolism, modulation of the tubulin-dependent cytoskeleton during migration of phagocytes and activation of the neutrophilic NADPH-oxidase. Also participates in regulatory T-cell differentiation together with CD69. Activates NADPH-oxidase by facilitating the enzyme complex assembly at the cell membrane, transferring arachidonic acid, an essential cofactor, to the enzyme complex and S100A8 contributes to the enzyme assembly by directly binding to NCF2/P67PHOX. The extracellular functions involve pro-inflammatory, antimicrobial, oxidant-scavenging and apoptosis-inducing activities. Its pro-inflammatory activity includes recruitment of leukocytes, promotion of cytokine and chemokine production, and regulation of leukocyte adhesion and migration. Acts as an alarmin or a danger associated molecular pattern (DAMP) molecule and stimulates innate immune cells via binding to pattern recognition receptors such as Toll-like receptor 4 (TLR4) and receptor for advanced glycation endproducts (AGER). Binding to TLR4 and AGER activates the MAP-kinase and NF-kappa-B signaling pathways resulting in the amplification of the pro-inflammatory cascade. Has antimicrobial activity towards bacteria and fungi and exerts its antimicrobial activity probably via chelation of Zn(2+) which is essential for microbial growth. Can induce cell death via autophagy and apoptosis and this occurs through the cross-talk of mitochondria and lysosomes via reactive oxygen species (ROS) and the process involves BNIP3. Can regulate neutrophil number and apoptosis by an anti-apoptotic effect; regulates cell survival via ITGAM/ITGB and TLR4 and a signaling mechanism involving MEK-ERK. Its role as an oxidant scavenger has a protective role in preventing exaggerated tissue damage by scavenging oxidants. Can act as a potent amplifier of inflammation in autoimmunity as well as in cancer development and tumor spread. The iNOS-S100A8/A9 transnitrosylase complex directs selective inflammatory stimulus-dependent S-nitrosylation of GAPDH and probably multiple targets such as ANXA5, EZR, MSN and VIM by recognizing a [IL]-x-C-x-x-[DE] motif; S100A8 seems to contribute to S-nitrosylation site selectivity. Its function is as follows. (Microbial infection) Upon infection by human coronavirus SARS-CoV-2, may induce expansion of aberrant immature neutrophils in a TLR4-dependent manner. The protein is Protein S100-A8 of Homo sapiens (Human).